The sequence spans 34 residues: Photosystem II reaction center protein M (34 aa).

A helical membrane pass occupies residues 7–27; sequence GFVATLLFVLVPAIFLIILYI.

It belongs to the PsbM family. In terms of assembly, PSII is composed of 1 copy each of membrane proteins PsbA, PsbB, PsbC, PsbD, PsbE, PsbF, PsbH, PsbI, PsbJ, PsbK, PsbL, PsbM, PsbT, PsbX, PsbY, PsbZ, Psb30/Ycf12, peripheral proteins PsbO, CyanoQ (PsbQ), PsbU, PsbV and a large number of cofactors. It forms dimeric complexes.

Its subcellular location is the cellular thylakoid membrane. Functionally, one of the components of the core complex of photosystem II (PSII). PSII is a light-driven water:plastoquinone oxidoreductase that uses light energy to abstract electrons from H(2)O, generating O(2) and a proton gradient subsequently used for ATP formation. It consists of a core antenna complex that captures photons, and an electron transfer chain that converts photonic excitation into a charge separation. This subunit is found at the monomer-monomer interface. In Synechococcus sp. (strain RCC307), this protein is Photosystem II reaction center protein M.